The sequence spans 1192 residues: Protein WWC2 (1192 aa).

2 WW domains span residues 10-43 (LPLPRGWEEARDYDGKVFYIDHNTRRTSWIDPRD) and 57-90 (DELPWGWEAGFDPQIGVYYIDHINKTTQIEDPRK). Coiled-coil stretches lie at residues 121–194 (KEQR…YKEQ) and 224–256 (ELKSIRKAISSGEKEKQDLMQSLAKLQERFHLD). Ser286 carries the phosphoserine modification. The stretch at 302-421 (LAEKVRLSLQ…KLEETTKLTT (120 aa)) forms a coiled coil. A disordered region spans residues 441-462 (SSLGSLASSRGSLNTSSRGSLN). The 124-residue stretch at 698 to 821 (ETAQVQIGLR…FSSEVFTLWY (124 aa)) folds into the C2 domain. The stretch at 859-887 (ALLARTSAELLAVEQELAQEEEEESGQEE) forms a coiled coil. Disordered stretches follow at residues 873–895 (QELAQEEEEESGQEEPRGPDGDW) and 911–991 (EAEV…SRQH). Acidic residues predominate over residues 875–885 (LAQEEEEESGQ). The span at 923-933 (TEDLSSCTSVP) shows a compositional bias: polar residues. The span at 938 to 951 (DGNRKESNCAKDLR) shows a compositional bias: basic and acidic residues. Thr1004 carries the phosphothreonine modification. Ser1022 carries the phosphoserine modification. The tract at residues 1031-1050 (SLFVRNSTERRSLRVKRTVC) is interaction with PRKCZ. A coiled-coil region spans residues 1068–1144 (DLELDLQASL…EQKQGLNAEK (77 aa)). Over residues 1124-1137 (QAEKQAEQSKEEQK) the composition is skewed to basic and acidic residues. The disordered stretch occupies residues 1124 to 1143 (QAEKQAEQSKEEQKQGLNAE).

It belongs to the WWC family. In terms of assembly, forms homodimers and heterodimers with WWC1 and WWC3. Interacts with DLC1 and PRKCZ. Interacts (via WW domains) with LATS1 and LATS2.

The protein resides in the cytoplasm. It is found in the cytosol. Regulator of the Hippo signaling pathway, also known as the Salvador-Warts-Hippo (SWH) pathway. Enhances phosphorylation of LATS1 and YAP1 and negatively regulates cell proliferation and organ growth due to a suppression of the transcriptional activity of YAP1, the major effector of the Hippo pathway. The polypeptide is Protein WWC2 (Homo sapiens (Human)).